The chain runs to 194 residues: Probable GTP-binding protein EngB (194 aa).

Positions 22 to 194 (GKPEIALVGR…EVWHWIEQHI (173 aa)) constitute an EngB-type G domain. Residues 30–37 (GRSNVGKS), 57–61 (GKTQT), 75–78 (DVPG), 142–145 (TKSD), and 175–177 (FSS) each bind GTP. 2 residues coordinate Mg(2+): Ser37 and Thr59.

The protein belongs to the TRAFAC class TrmE-Era-EngA-EngB-Septin-like GTPase superfamily. EngB GTPase family. It depends on Mg(2+) as a cofactor.

In terms of biological role, necessary for normal cell division and for the maintenance of normal septation. In Leuconostoc mesenteroides subsp. mesenteroides (strain ATCC 8293 / DSM 20343 / BCRC 11652 / CCM 1803 / JCM 6124 / NCDO 523 / NBRC 100496 / NCIMB 8023 / NCTC 12954 / NRRL B-1118 / 37Y), this protein is Probable GTP-binding protein EngB.